The following is a 387-amino-acid chain: ATP phosphoribosyltransferase regulatory subunit (387 aa).

It belongs to the class-II aminoacyl-tRNA synthetase family. HisZ subfamily. As to quaternary structure, heteromultimer composed of HisG and HisZ subunits.

The protein resides in the cytoplasm. Its pathway is amino-acid biosynthesis; L-histidine biosynthesis; L-histidine from 5-phospho-alpha-D-ribose 1-diphosphate: step 1/9. In terms of biological role, required for the first step of histidine biosynthesis. May allow the feedback regulation of ATP phosphoribosyltransferase activity by histidine. The sequence is that of ATP phosphoribosyltransferase regulatory subunit from Psychrobacter cryohalolentis (strain ATCC BAA-1226 / DSM 17306 / VKM B-2378 / K5).